The chain runs to 348 residues: Flagellar P-ring protein (348 aa).

The N-terminal stretch at 1–16 (MRIFLLCLALSLSVFA) is a signal peptide.

Belongs to the FlgI family. In terms of assembly, the basal body constitutes a major portion of the flagellar organelle and consists of four rings (L,P,S, and M) mounted on a central rod.

It localises to the periplasm. It is found in the bacterial flagellum basal body. Its function is as follows. Assembles around the rod to form the L-ring and probably protects the motor/basal body from shearing forces during rotation. The protein is Flagellar P-ring protein of Campylobacter lari (strain RM2100 / D67 / ATCC BAA-1060).